The primary structure comprises 509 residues: Steroid 17-alpha-hydroxylase/17,20 lyase (509 aa).

N202 contributes to the substrate binding site. Residue C442 coordinates heme.

This sequence belongs to the cytochrome P450 family. It depends on heme as a cofactor.

It is found in the endoplasmic reticulum membrane. The protein resides in the microsome membrane. The catalysed reaction is a C21-steroid + reduced [NADPH--hemoprotein reductase] + O2 = a 17alpha-hydroxy-C21-steroid + oxidized [NADPH--hemoprotein reductase] + H2O + H(+). It carries out the reaction progesterone + reduced [NADPH--hemoprotein reductase] + O2 = 17alpha-hydroxyprogesterone + oxidized [NADPH--hemoprotein reductase] + H2O + H(+). It catalyses the reaction pregnenolone + reduced [NADPH--hemoprotein reductase] + O2 = 17alpha-hydroxypregnenolone + oxidized [NADPH--hemoprotein reductase] + H2O + H(+). The enzyme catalyses 17alpha-hydroxyprogesterone + reduced [NADPH--hemoprotein reductase] + O2 = androst-4-ene-3,17-dione + acetate + oxidized [NADPH--hemoprotein reductase] + H2O + 2 H(+). The catalysed reaction is 17alpha-hydroxyprogesterone + reduced [NADPH--hemoprotein reductase] + O2 = 16alpha,17alpha-dihydroxyprogesterone + oxidized [NADPH--hemoprotein reductase] + H2O + H(+). It carries out the reaction 16alpha,17alpha-dihydroxyprogesterone + reduced [NADPH--hemoprotein reductase] + O2 = 6beta,16alpha,17alpha-trihydroxyprogesterone + oxidized [NADPH--hemoprotein reductase] + H2O + H(+). It catalyses the reaction 17alpha-hydroxypregnenolone + reduced [NADPH--hemoprotein reductase] + O2 = 3beta-hydroxyandrost-5-en-17-one + acetate + oxidized [NADPH--hemoprotein reductase] + H2O + 2 H(+). The enzyme catalyses 16alpha,17alpha-dihydroxypregnenolone + reduced [NADPH--hemoprotein reductase] + O2 = 3beta,16alpha-dihydroxy-androst-5-en-17-one + acetate + oxidized [NADPH--hemoprotein reductase] + H2O + 2 H(+). The catalysed reaction is 3beta-hydroxyandrost-5-en-17-one + reduced [NADPH--hemoprotein reductase] + O2 = 3beta,16alpha-dihydroxy-androst-5-en-17-one + oxidized [NADPH--hemoprotein reductase] + H2O + H(+). It carries out the reaction androst-4-ene-3,17-dione + reduced [NADPH--hemoprotein reductase] + O2 = 16alpha-hydroxyandrost-4-ene-3,17-dione + oxidized [NADPH--hemoprotein reductase] + H2O + H(+). Its pathway is steroid hormone biosynthesis. The protein operates within steroid biosynthesis; glucocorticoid biosynthesis. With respect to regulation, regulated predominantly by intracellular cAMP levels. The 17,20-lyase activity is stimulated by cytochrome b5, which acts as an allosteric effector increasing the Vmax of the lyase activity. In terms of biological role, a cytochrome P450 monooxygenase involved in corticoid and androgen biosynthesis. Catalyzes 17-alpha hydroxylation of C21 steroids, which is common for both pathways. A second oxidative step, required only for androgen synthesis, involves an acyl-carbon cleavage. The 17-alpha hydroxy intermediates, as part of adrenal glucocorticoids biosynthesis pathway, are precursors of cortisol. Hydroxylates steroid hormones, pregnenolone and progesterone to form 17-alpha hydroxy metabolites, followed by the cleavage of the C17-C20 bond to form C19 steroids, dehydroepiandrosterone (DHEA) and androstenedione. Has 16-alpha hydroxylase activity. Catalyzes 16-alpha hydroxylation of 17-alpha hydroxy pregnenolone, followed by the cleavage of the C17-C20 bond to form 16-alpha-hydroxy DHEA. Also 16-alpha hydroxylates androgens, relevant for estriol synthesis. Mechanistically, uses molecular oxygen inserting one oxygen atom into a substrate, and reducing the second into a water molecule, with two electrons provided by NADPH via cytochrome P450 reductase (CPR; NADPH-ferrihemoprotein reductase). This is Steroid 17-alpha-hydroxylase/17,20 lyase (CYP17A1) from Sus scrofa (Pig).